Reading from the N-terminus, the 568-residue chain is MSTAPSNNRLNRQQAESFLSSLSGHYYPNSSREFISGSNKDIQVPFRRIHLSETLHQPTPGVKLPPNEPVDVYDTSSVYGDPDATIDVKAGLKKVRENWIQERHSENQQYNHGITQLAYARRGVITPEMEFIALRENMGRGHLKNPITPEFVRDEVASGRAIIPVNTHHPESEPMIIGRNFLVKVNANIGNSSVSSSIEEEVEKLVWATRWGADTVMDLSTGRNIHQTREWILRNSPVPIGTVPIYQALERVNGVAEDLSWPVFKDVLLEQAEQGVDYFTIHAGVLHDFIKLTAKRVTGIVSRGGSIMAKWCMAHQQESFLYQHFRDICKICAKYDVSLSLGDGLRPGSIADANDEAQFAELRVLGELTQIAWEYDVQVMIEGPGHVPMHKIQENMDEQLKHCHGAPFYTLGPLTTDIAPGYDHITSCIGAAMIGAFGCAMLCYVTPKEHLGLPNKEDVKQGMIAYKIAAHAADLAKGHPGAQARDDAMSKARFEFRWEDQFNLALDPVTARSYHDETLPQDSNKTAQFCSMCGPKFCSMKISHEVRQYNPDTRIDVKVKDAATEGAE.

Substrate-binding positions include Asn188, Met217, Tyr246, His282, 302–304, 343–346, and Glu382; these read SRG and DGLR. Zn(2+) is bound at residue His386. Residue Tyr409 coordinates substrate. Position 450 (His450) interacts with Zn(2+). Residues Cys530, Cys533, and Cys538 each contribute to the [4Fe-4S] cluster site.

It belongs to the ThiC family. As to quaternary structure, homodimer. [4Fe-4S] cluster is required as a cofactor.

It carries out the reaction 5-amino-1-(5-phospho-beta-D-ribosyl)imidazole + S-adenosyl-L-methionine = 4-amino-2-methyl-5-(phosphooxymethyl)pyrimidine + CO + 5'-deoxyadenosine + formate + L-methionine + 3 H(+). It functions in the pathway cofactor biosynthesis; thiamine diphosphate biosynthesis. Functionally, catalyzes the synthesis of the hydroxymethylpyrimidine phosphate (HMP-P) moiety of thiamine from aminoimidazole ribotide (AIR) in a radical S-adenosyl-L-methionine (SAM)-dependent reaction. The polypeptide is Phosphomethylpyrimidine synthase (Idiomarina loihiensis (strain ATCC BAA-735 / DSM 15497 / L2-TR)).